The chain runs to 254 residues: Ferritin-1, chloroplastic (254 aa).

The N-terminal 47 residues, M1 to A47, are a transit peptide targeting the chloroplast. The tract at residues S48–R86 is extension peptide (EP). In terms of domain architecture, Ferritin-like diiron spans Q87–G240. The Fe cation site is built by E104, E139, H142, E188, and Q222.

It belongs to the ferritin family. Oligomer of 24 subunits. There are two types of subunits: L (light) chain and H (heavy) chain. The major chain can be light or heavy, depending on the species and tissue type. The functional molecule forms a roughly spherical shell with a diameter of 12 nm and contains a central cavity into which the insoluble mineral iron core is deposited.

It localises to the plastid. It is found in the chloroplast. The enzyme catalyses 4 Fe(2+) + O2 + 4 H(+) = 4 Fe(3+) + 2 H2O. Its function is as follows. Stores iron in a soluble, non-toxic, readily available form. Important for iron homeostasis. Has ferroxidase activity. Iron is taken up in the ferrous form and deposited as ferric hydroxides after oxidation. The chain is Ferritin-1, chloroplastic (LSC30) from Brassica napus (Rape).